A 44-amino-acid polypeptide reads, in one-letter code: Cytochrome b559 subunit beta (44 aa).

Residues 17–41 (VRWLAVHTLAVPSVFFVGAIAAMQF) traverse the membrane as a helical segment. Heme is bound by residues R18 and H23.

Belongs to the PsbE/PsbF family. As to quaternary structure, heterodimer of an alpha subunit and a beta subunit. PSII is composed of 1 copy each of membrane proteins PsbA, PsbB, PsbC, PsbD, PsbE, PsbF, PsbH, PsbI, PsbJ, PsbK, PsbL, PsbM, PsbT, PsbX, PsbY, PsbZ, Psb30/Ycf12, peripheral proteins PsbO, CyanoQ (PsbQ), PsbU, PsbV and a large number of cofactors. It forms dimeric complexes. Heme b serves as cofactor.

The protein localises to the cellular thylakoid membrane. In terms of biological role, this b-type cytochrome is tightly associated with the reaction center of photosystem II (PSII). PSII is a light-driven water:plastoquinone oxidoreductase that uses light energy to abstract electrons from H(2)O, generating O(2) and a proton gradient subsequently used for ATP formation. It consists of a core antenna complex that captures photons, and an electron transfer chain that converts photonic excitation into a charge separation. The sequence is that of Cytochrome b559 subunit beta from Synechocystis sp. (strain ATCC 27184 / PCC 6803 / Kazusa).